A 166-amino-acid polypeptide reads, in one-letter code: Flagellar assembly factor FliW (166 aa).

This sequence belongs to the FliW family. As to quaternary structure, interacts with translational regulator CsrA and flagellin(s).

It is found in the cytoplasm. Functionally, acts as an anti-CsrA protein, binds CsrA and prevents it from repressing translation of its target genes, one of which is flagellin. Binds to flagellin and participates in the assembly of the flagellum. This Desulfovibrio desulfuricans (strain ATCC 27774 / DSM 6949 / MB) protein is Flagellar assembly factor FliW.